Here is an 86-residue protein sequence, read N- to C-terminus: Apolipoprotein C-I (86 aa).

The signal sequence occupies residues 1–26 (MRLFLSLPVLVVVLLMILEGPGPAQG).

Belongs to the apolipoprotein C1 family.

The protein resides in the secreted. Its function is as follows. Inhibitor of lipoprotein binding to the low density lipoprotein (LDL) receptor, LDL receptor-related protein, and very low density lipoprotein (VLDL) receptor. Associates with high density lipoproteins (HDL) and the triacylglycerol-rich lipoproteins in the plasma and makes up about 10% of the protein of the VLDL and 2% of that of HDL. Appears to interfere directly with fatty acid uptake and is also the major plasma inhibitor of cholesteryl ester transfer protein (CETP). Binds free fatty acids and reduces their intracellular esterification. Modulates the interaction of APOE with beta-migrating VLDL and inhibits binding of beta-VLDL to the LDL receptor-related protein. The protein is Apolipoprotein C-I (APOC1) of Ateles geoffroyi (Black-handed spider monkey).